The sequence spans 503 residues: Transcription termination/antitermination protein NusA (503 aa).

One can recognise an S1 motif domain in the interval 139-203 (GEIINGIVKR…KGPQIFLSRV (65 aa)). In terms of domain architecture, KH spans 308 to 378 (RHKVEVVVSQ…LDVEEVIGQL (71 aa)).

This sequence belongs to the NusA family. In terms of assembly, monomer. Binds directly to the core enzyme of the DNA-dependent RNA polymerase and to nascent RNA.

It is found in the cytoplasm. Functionally, participates in both transcription termination and antitermination. This is Transcription termination/antitermination protein NusA from Rickettsia conorii (strain ATCC VR-613 / Malish 7).